Consider the following 84-residue polypeptide: CDC42 small effector protein 2-A (84 aa).

2 S-palmitoyl cysteine lipidation sites follow: Cys10 and Cys11. The region spanning 29–42 (IGEPTNFVHTAHVG) is the CRIB domain.

This sequence belongs to the CDC42SE/SPEC family.

It localises to the cytoplasm. The protein localises to the cytoskeleton. It is found in the cell membrane. Functionally, probably involved in the organization of the actin cytoskeleton by acting downstream of CDC42, inducing actin filament assembly. This Xenopus tropicalis (Western clawed frog) protein is CDC42 small effector protein 2-A (cdc42se2-A).